The sequence spans 236 residues: Pyridoxine 5'-phosphate synthase (236 aa).

Asn-7 provides a ligand contact to 3-amino-2-oxopropyl phosphate. Position 9-10 (9-10 (DH)) interacts with 1-deoxy-D-xylulose 5-phosphate. 3-amino-2-oxopropyl phosphate is bound at residue Arg-18. The active-site Proton acceptor is His-43. Residues Arg-45 and His-50 each coordinate 1-deoxy-D-xylulose 5-phosphate. Glu-69 functions as the Proton acceptor in the catalytic mechanism. Residue Thr-99 coordinates 1-deoxy-D-xylulose 5-phosphate. The active-site Proton donor is the His-190. 3-amino-2-oxopropyl phosphate-binding positions include Gly-191 and 212–213 (GH).

The protein belongs to the PNP synthase family. As to quaternary structure, homooctamer; tetramer of dimers.

Its subcellular location is the cytoplasm. It catalyses the reaction 3-amino-2-oxopropyl phosphate + 1-deoxy-D-xylulose 5-phosphate = pyridoxine 5'-phosphate + phosphate + 2 H2O + H(+). It participates in cofactor biosynthesis; pyridoxine 5'-phosphate biosynthesis; pyridoxine 5'-phosphate from D-erythrose 4-phosphate: step 5/5. Catalyzes the complicated ring closure reaction between the two acyclic compounds 1-deoxy-D-xylulose-5-phosphate (DXP) and 3-amino-2-oxopropyl phosphate (1-amino-acetone-3-phosphate or AAP) to form pyridoxine 5'-phosphate (PNP) and inorganic phosphate. This is Pyridoxine 5'-phosphate synthase from Desulfosudis oleivorans (strain DSM 6200 / JCM 39069 / Hxd3) (Desulfococcus oleovorans).